Here is a 141-residue protein sequence, read N- to C-terminus: MPKNKGKGGKNRRRGKNENEQKRELQFKEEGQEYAQVLRMLGNGRLEASCFDGEKRLCHISGRLRKKEWINNGDIILIQLRDYQNDKADVILRYNVDEARNLKTYGELPETARINETDAFDDVEDIPFEFVAEDDIDIDTL.

A compositionally biased stretch (basic residues) spans 1 to 15 (MPKNKGKGGKNRRRG). The interval 1–28 (MPKNKGKGGKNRRRGKNENEQKRELQFK) is disordered. Over residues 16-28 (KNENEQKRELQFK) the composition is skewed to basic and acidic residues. The 75-residue stretch at 21 to 95 (QKRELQFKEE…DKADVILRYN (75 aa)) folds into the S1-like domain.

This sequence belongs to the eIF-1A family.

Functionally, seems to be required for maximal rate of protein biosynthesis. Enhances ribosome dissociation into subunits and stabilizes the binding of the initiator Met-tRNA(I) to 40 S ribosomal subunits. This is Eukaryotic translation initiation factor 1A (eif1a) from Dictyostelium discoideum (Social amoeba).